We begin with the raw amino-acid sequence, 91 residues long: Putative membrane protein insertion efficiency factor (91 aa).

The disordered stretch occupies residues 72–91 (SGGNDPVPEKLTHINHQHEK). Basic and acidic residues predominate over residues 78–91 (VPEKLTHINHQHEK).

The protein belongs to the UPF0161 family.

The protein localises to the cell inner membrane. Functionally, could be involved in insertion of integral membrane proteins into the membrane. The chain is Putative membrane protein insertion efficiency factor from Pseudoalteromonas translucida (strain TAC 125).